The chain runs to 122 residues: Large ribosomal subunit protein uL14c (122 aa).

This sequence belongs to the universal ribosomal protein uL14 family. In terms of assembly, part of the 50S ribosomal subunit.

It localises to the plastid. The protein localises to the chloroplast. Functionally, binds to 23S rRNA. In Marchantia polymorpha (Common liverwort), this protein is Large ribosomal subunit protein uL14c.